The following is a 246-amino-acid chain: Complement C1q subcomponent subunit C (246 aa).

The N-terminal stretch at 1–29 is a signal peptide; that stretch reads MVVGPSCQPPCGLCLLLLFLLALPLRSQA. Residues 32–113 form the Collagen-like domain; sequence GCYGIPGMPG…GPPGEPGVEG (82 aa). A 4-hydroxyproline mark is found at Pro-37, Pro-40, Pro-43, Pro-46, and Pro-64. Residues 44-116 are disordered; sequence GAPGKDGHDG…GEPGVEGRYK (73 aa). Lys-76 is subject to 5-hydroxylysine. Residue Lys-76 is glycosylated (O-linked (Gal...) hydroxylysine). Pro-82, Pro-97, Pro-100, and Pro-106 each carry 4-hydroxyproline. The segment covering 99 to 108 has biased composition (pro residues); it reads DPGPRGPPGE. In terms of domain architecture, C1q spans 116 to 246; sequence KQKHQSVFTV…VFSGFLLFPD (131 aa). Cysteines 180 and 194 form a disulfide.

Core component of the complement C1 complex, a calcium-dependent complex composed of 1 molecule of the C1Q subcomplex, 2 molecules of C1R and 2 molecules of C1S. The C1Q subcomplex is composed 18 subunits: 3 chains of C1QA, C1QB, and C1QC trimerize to form 6 collagen-like triple helices connected to six globular ligand-recognition modules (C1q domain). O-linked glycans consist of Glc-Gal disaccharides bound to the oxygen atom of post-translationally added hydroxyl groups.

The protein resides in the secreted. It localises to the cell surface. Its activity is regulated as follows. The C1Q subcomplex is inhibited by sulfated molecules, such as triterpenoid sulfates, heparan sulfate, or chondroitin sulfates. In terms of biological role, core component of the complement C1 complex, a multiprotein complex that initiates the classical pathway of the complement system, a cascade of proteins that leads to phagocytosis and breakdown of pathogens and signaling that strengthens the adaptive immune system. The classical complement pathway is initiated by the C1Q subcomplex of the C1 complex, which specifically binds IgG or IgM immunoglobulins complexed with antigens, forming antigen-antibody complexes on the surface of pathogens: C1QA, together with C1QB and C1QC, specifically recognizes and binds the Fc regions of IgG or IgM via its C1q domain. Immunoglobulin-binding activates the proenzyme C1R, which cleaves C1S, initiating the proteolytic cascade of the complement system. The C1Q subcomplex is activated by a hexamer of IgG complexed with antigens, while it is activated by a pentameric IgM. The C1Q subcomplex also recognizes and binds phosphatidylserine exposed on the surface of cells undergoing programmed cell death, possibly promoting activation of the complement system. The protein is Complement C1q subcomponent subunit C of Mus musculus (Mouse).